The primary structure comprises 661 residues: MILKNNIAYAENEQEKLSFLSHITWDDAHQRNDKNQFKGAKLIQEFVKHLPHKPGVYRMVDENGKVLYVGKARNLKKRVSNYTREQGHNNRITRMIRATSHMEFVVTHTEIEALLLEANLIKRLHPRFNVLLRDDKSFPYIIITDDHRAPALYKHRGARTRKAHYFGPFASSSAVTQTINVLQRAFLLRTCTDSVLENRTRPCLLYQIKRCSAPCTHEISDRDYRELVKGAKSFLSGKSQSIKNDMVQAMHKAAKNFDFEQAAAYRDRLSALSHIQSHQGINPQTIEEADVFAIAQKEGISCIQVFFFRMGQNWGNRAYFPKADPSFSSSEILASFLSQFYDDKPLPKLILLSESIEDKTLLAEAFSLKANRKISLSLPKQGERKTLVNYAYINAHETLGHKLAETATHTKLFQGIAEIFQLPHTPCRIEIYDNSHIMGTNAVGAMIVAGKNGFIKNQYRKFNIRSTDITPGDDFGMMKEVIKRRFSRLIKEHGLPHESKNIQSKDDASFPIWPDLILIDGGKGQINSVHTILSELGLDNFMTVVGIAKGADRRAGRERFFIKGKTPFTLPPCDPILYFLQRLRDEAHRFAIGTHRAKRKKETLKNPLDEIENIGPTRKRALLHHFGSAKAIASASLEDLTKVIGISTTIAQKIYNHFNEK.

Positions 52 to 130 (HKPGVYRMVD…IKRLHPRFNV (79 aa)) constitute a GIY-YIG domain. A UVR domain is found at 240 to 275 (QSIKNDMVQAMHKAAKNFDFEQAAAYRDRLSALSHI).

This sequence belongs to the UvrC family. Interacts with UvrB in an incision complex.

It localises to the cytoplasm. Functionally, the UvrABC repair system catalyzes the recognition and processing of DNA lesions. UvrC both incises the 5' and 3' sides of the lesion. The N-terminal half is responsible for the 3' incision and the C-terminal half is responsible for the 5' incision. This chain is UvrABC system protein C, found in Bartonella henselae (strain ATCC 49882 / DSM 28221 / CCUG 30454 / Houston 1) (Rochalimaea henselae).